We begin with the raw amino-acid sequence, 418 residues long: Glutamyl-tRNA reductase (418 aa).

Residues 49–52, Ser-109, 114–116, and Gln-120 contribute to the substrate site; these read TCNR and EPQ. The active-site Nucleophile is Cys-50. An NADP(+)-binding site is contributed by 189–194; sequence GAGETI.

It belongs to the glutamyl-tRNA reductase family. Homodimer.

The enzyme catalyses (S)-4-amino-5-oxopentanoate + tRNA(Glu) + NADP(+) = L-glutamyl-tRNA(Glu) + NADPH + H(+). It functions in the pathway porphyrin-containing compound metabolism; protoporphyrin-IX biosynthesis; 5-aminolevulinate from L-glutamyl-tRNA(Glu): step 1/2. Its function is as follows. Catalyzes the NADPH-dependent reduction of glutamyl-tRNA(Glu) to glutamate 1-semialdehyde (GSA). The protein is Glutamyl-tRNA reductase of Escherichia coli O127:H6 (strain E2348/69 / EPEC).